The sequence spans 248 residues: Mannose-binding protein C (248 aa).

The signal sequence occupies residues 1 to 20; that stretch reads MSLFPSLPLLLLSVVATSYS. The Collagen-like domain maps to 42-99; sequence GINGFPGKDGRDGTKGEKGEPGQGLRGLQGPPGKLGPPGNPGPSGSPGPKGQKGDPGE. The disordered stretch occupies residues 43 to 111; it reads INGFPGKDGR…DCDSSLAASE (69 aa). Residue Pro-47 is modified to 4-hydroxyproline. Residues 49-61 are compositionally biased toward basic and acidic residues; the sequence is KDGRDGTKGEKGE. 4-hydroxyproline occurs at positions 73, 79, 82, and 88. The segment covering 75–87 has biased composition (pro residues); that stretch reads KLGPPGNPGPSGS. Residues 112 to 130 are a coiled coil; that stretch reads RKALQTEMAHIKKWLTFSL. Residues 134 to 245 enclose the C-type lectin domain; sequence VGNKFFLTNG…CSSSHLALCE (112 aa). 2 disulfides stabilise this stretch: Cys-155–Cys-244 and Cys-222–Cys-236.

As to quaternary structure, oligomeric complex of 3 or more homotrimers. Interacts with MASP1 and MASP2. Interacts with MEP1A and MEP1B and may inhibit their catalytic activity. In terms of processing, hydroxylation on proline residues within the sequence motif, GXPG, is most likely to be 4-hydroxy as this fits the requirement for 4-hydroxylation in vertebrates.

It localises to the secreted. In terms of biological role, calcium-dependent lectin involved in innate immune defense. Binds mannose, fucose and N-acetylglucosamine on different microorganisms and activates the lectin complement pathway. Binds to late apoptotic cells, as well as to apoptotic blebs and to necrotic cells, but not to early apoptotic cells, facilitating their uptake by macrophages. The protein is Mannose-binding protein C (MBL2) of Trachypithecus obscurus (Dusky leaf-monkey).